Reading from the N-terminus, the 116-residue chain is Iron-sulfur cluster insertion protein ErpA (116 aa).

Residues cysteine 44, cysteine 108, and cysteine 110 each coordinate iron-sulfur cluster.

This sequence belongs to the HesB/IscA family. As to quaternary structure, homodimer. Iron-sulfur cluster serves as cofactor.

Its function is as follows. Required for insertion of 4Fe-4S clusters for at least IspG. The sequence is that of Iron-sulfur cluster insertion protein ErpA from Shewanella oneidensis (strain ATCC 700550 / JCM 31522 / CIP 106686 / LMG 19005 / NCIMB 14063 / MR-1).